We begin with the raw amino-acid sequence, 233 residues long: Glucosamine-6-phosphate deaminase (233 aa).

Aspartate 62 acts as the Proton acceptor; for enolization step in catalysis. The active-site For ring-opening step is asparagine 128. Histidine 130 serves as the catalytic Proton acceptor; for ring-opening step. Glutamate 135 serves as the catalytic For ring-opening step.

Belongs to the glucosamine/galactosamine-6-phosphate isomerase family. NagB subfamily.

The enzyme catalyses alpha-D-glucosamine 6-phosphate + H2O = beta-D-fructose 6-phosphate + NH4(+). The protein operates within amino-sugar metabolism; N-acetylneuraminate degradation; D-fructose 6-phosphate from N-acetylneuraminate: step 5/5. Its function is as follows. Catalyzes the reversible isomerization-deamination of glucosamine 6-phosphate (GlcN6P) to form fructose 6-phosphate (Fru6P) and ammonium ion. This Streptococcus agalactiae serotype Ia (strain ATCC 27591 / A909 / CDC SS700) protein is Glucosamine-6-phosphate deaminase.